A 331-amino-acid polypeptide reads, in one-letter code: Rho GTPase-activating protein 5 (331 aa).

Residues 3-16 form the CRIB domain; sequence IGGPTNIRHVAHVT. Residues 48–225 form the Rho-GAP domain; that stretch reads VSTESMQLSY…LLKSLTEKTV (178 aa). Basic and acidic residues predominate over residues 227 to 251; the sequence is EREASSSVVDRRCSKEAEDGEKEKD. The disordered stretch occupies residues 227-331; that stretch reads EREASSSVVD…VQPPICSSNP (105 aa). The segment covering 252–277 has biased composition (acidic residues); that stretch reads NEEEEEDEEEEEEEEDEDEDEEEEGD.

Expressed in differentiating xylem cells.

It is found in the cell membrane. Its function is as follows. Acts as a GTPase activator for the Rac-type GTPase by converting it to an inactive GDP-bound state. This is Rho GTPase-activating protein 5 (ROPGAP5) from Arabidopsis thaliana (Mouse-ear cress).